A 382-amino-acid chain; its full sequence is 6-oxocyclohex-1-ene-1-carbonyl-CoA hydrolase (382 aa).

This sequence belongs to the enoyl-CoA hydratase/isomerase family. Homohexamer.

The catalysed reaction is 6-oxocyclohex-1-ene-1-carbonyl-CoA + 2 H2O = 3-hydroxy-6-carboxyhexanoyl-CoA + H(+). It functions in the pathway aromatic compound metabolism; benzoyl-CoA degradation. Functionally, involved in the central benzoyl-CoA catabolism. Catalyzes the addition of one molecule of water to the double bond and the hydrolytic cleavage of C-C bond in the alicyclic ring, 6-oxocyclohex-1-ene-1-carbonyl-CoA (6-OCH-CoA) to yield 3-hydroxypimelyl-CoA. This is 6-oxocyclohex-1-ene-1-carbonyl-CoA hydrolase from Syntrophus aciditrophicus (strain SB).